The following is a 1492-amino-acid chain: Condensin-2 complex subunit D3-L (1492 aa).

The tract at residues 152–201 is disordered; sequence WPRDPNASRKRKKDTLKSSQGDNRGGRKRPRPPRRDEQEMEDLSEEEQDE. A compositionally biased stretch (acidic residues) spans 189–201; that stretch reads QEMEDLSEEEQDE. HEAT repeat units follow at residues 543–581, 583–619, and 621–659; these read SSDGKEVLTMLRYRAGDEKTNVRKSALQVLVNVLKCHLI, CSSEDLSTLQDRCRDPAVSVRKQALTSLTELLLAQPH, and VLIQKAWLTGLIPVVLDTESSVQEKALECLDQLLLQSIT. 3 disordered regions span residues 1269–1345, 1359–1406, and 1454–1492; these read QLER…PRPR, RKAA…SLVG, and IMSPDKPAPQPRKWNVESPVQRRSIRQRISGKAPLKPSN. Residues 1277 to 1290 are compositionally biased toward polar residues; sequence NVQNPPSAESTGSP. Residues 1377–1388 show a composition bias toward low complexity; that stretch reads PSTPSPARTTSS.

In terms of assembly, component of the condensin-2 complex, which contains the smc2 and smc4 heterodimer, and three non SMC subunits, ncapg2, ncaph2 and ncapd3 that probably regulate the complex.

Its subcellular location is the nucleus. Regulatory subunit of the condensin-2 complex, a complex which establishes mitotic chromosome architecture and is involved in physical rigidity of the chromatid axis. This is Condensin-2 complex subunit D3-L from Xenopus laevis (African clawed frog).